The chain runs to 53 residues: Rubredoxin (53 aa).

Positions Met-1–Ala-53 constitute a Rubredoxin-like domain. Fe cation contacts are provided by Cys-6, Cys-9, Cys-39, and Cys-42.

The protein belongs to the rubredoxin family. Fe(3+) is required as a cofactor.

Its function is as follows. Rubredoxin is a small nonheme, iron protein lacking acid-labile sulfide. Its single Fe, chelated to 4 Cys, functions as an electron acceptor and may also stabilize the conformation of the molecule. The polypeptide is Rubredoxin (Acetoanaerobium sticklandii (strain ATCC 12662 / DSM 519 / JCM 1433 / CCUG 9281 / NCIMB 10654 / HF) (Clostridium sticklandii)).